A 208-amino-acid polypeptide reads, in one-letter code: MNRKSIAKGKLVRRFGVNIFEQPKYDKLLKKKTNPPGMHGRSRRTKVTEYGKQLIEKQKVKFTYGVSERQLTNVFKEARRQHGVTGDNLLALLERRIDNIVYRAGFAISRAHARQIVSHGIIILNGRRVTIPSITLRANDIIQVKEKDSFKKLVRSNIEKTSTLRKLPDWIEVNADALNVKIIRTPSRDEIPTLANEQMIVEYYSKRA.

Residues 95 to 159 (RRIDNIVYRA…FKKLVRSNIE (65 aa)) form the S4 RNA-binding domain.

The protein belongs to the universal ribosomal protein uS4 family. As to quaternary structure, part of the 30S ribosomal subunit. Contacts protein S5. The interaction surface between S4 and S5 is involved in control of translational fidelity.

One of the primary rRNA binding proteins, it binds directly to 16S rRNA where it nucleates assembly of the body of the 30S subunit. Its function is as follows. With S5 and S12 plays an important role in translational accuracy. The polypeptide is Small ribosomal subunit protein uS4 (Borrelia recurrentis (strain A1)).